The following is a 230-amino-acid chain: Transmembrane protein 221 (230 aa).

4 helical membrane passes run 12-32 (AMTL…QLLF), 73-93 (ALAA…ALCG), 125-145 (LFCC…LLLF), and 147-167 (IEAG…LVAI). A disordered region spans residues 184–230 (RELSPPSFEDEPARPSEDSKSGCRAQPPQDEETETPIGAVTHQGSHF). Basic and acidic residues predominate over residues 194–204 (EPARPSEDSKS).

It localises to the membrane. The protein is Transmembrane protein 221 (Tmem221) of Mus musculus (Mouse).